Reading from the N-terminus, the 238-residue chain is ATP-dependent dethiobiotin synthetase BioD (238 aa).

An ATP-binding site is contributed by 13-18 (EIGKTV). T17 is a binding site for Mg(2+). Residue K38 is part of the active site. T42 contributes to the substrate binding site. Mg(2+) contacts are provided by R59 and E111. ATP is bound by residues 111 to 114 (EGAG), 175 to 176 (NQ), and 204 to 206 (PLL).

The protein belongs to the dethiobiotin synthetase family. As to quaternary structure, homodimer. Requires Mg(2+) as cofactor.

The protein localises to the cytoplasm. It carries out the reaction (7R,8S)-7,8-diammoniononanoate + CO2 + ATP = (4R,5S)-dethiobiotin + ADP + phosphate + 3 H(+). It functions in the pathway cofactor biosynthesis; biotin biosynthesis; biotin from 7,8-diaminononanoate: step 1/2. Its function is as follows. Catalyzes a mechanistically unusual reaction, the ATP-dependent insertion of CO2 between the N7 and N8 nitrogen atoms of 7,8-diaminopelargonic acid (DAPA, also called 7,8-diammoniononanoate) to form a ureido ring. This is ATP-dependent dethiobiotin synthetase BioD from Geobacillus kaustophilus (strain HTA426).